The following is a 118-amino-acid chain: Large ribosomal subunit protein bL20 (118 aa).

The protein belongs to the bacterial ribosomal protein bL20 family.

In terms of biological role, binds directly to 23S ribosomal RNA and is necessary for the in vitro assembly process of the 50S ribosomal subunit. It is not involved in the protein synthesizing functions of that subunit. This Aliarcobacter butzleri (strain RM4018) (Arcobacter butzleri) protein is Large ribosomal subunit protein bL20.